We begin with the raw amino-acid sequence, 732 residues long: Probable ATP-dependent RNA helicase DHX35 homolog (732 aa).

The segment at 1 to 50 (MSYHPGHGHRQEPRKGAGARRGFARPDDSADAPRTGPLIFEERSTENAGA) is disordered. A Helicase ATP-binding domain is found at 87–251 (LYMCERYRTI…FEMNETGNSD (165 aa)). 100 to 107 (GETGCGKS) lines the ATP pocket. The short motif at 198–201 (DEAH) is the DEAH box element. One can recognise a Helicase C-terminal domain in the interval 283-457 (AVDTVINIHK…STILQLKALG (175 aa)).

It belongs to the DEAD box helicase family. DEAH subfamily.

It carries out the reaction ATP + H2O = ADP + phosphate + H(+). The polypeptide is Probable ATP-dependent RNA helicase DHX35 homolog (Caenorhabditis elegans).